Reading from the N-terminus, the 679-residue chain is Glycine--tRNA ligase beta subunit (679 aa).

This sequence belongs to the class-II aminoacyl-tRNA synthetase family. As to quaternary structure, tetramer of two alpha and two beta subunits.

It localises to the cytoplasm. It catalyses the reaction tRNA(Gly) + glycine + ATP = glycyl-tRNA(Gly) + AMP + diphosphate. The protein is Glycine--tRNA ligase beta subunit of Streptococcus pyogenes serotype M18 (strain MGAS8232).